Consider the following 765-residue polypeptide: 5-methyltetrahydropteroyltriglutamate--homocysteine methyltransferase (765 aa).

5-methyltetrahydropteroyltri-L-glutamate-binding positions include R16 to K19 and K121. Residues I441–S443 and E494 contribute to the L-homocysteine site. L-methionine is bound by residues I441 to S443 and E494. 5-methyltetrahydropteroyltri-L-glutamate-binding positions include R525–C526 and W571. D609 lines the L-homocysteine pocket. Residue D609 coordinates L-methionine. Residue E615 participates in 5-methyltetrahydropteroyltri-L-glutamate binding. The Zn(2+) site is built by H651, C653, and E675. The Proton donor role is filled by H704. C736 serves as a coordination point for Zn(2+).

The protein belongs to the vitamin-B12 independent methionine synthase family. Zn(2+) serves as cofactor.

The catalysed reaction is 5-methyltetrahydropteroyltri-L-glutamate + L-homocysteine = tetrahydropteroyltri-L-glutamate + L-methionine. It functions in the pathway amino-acid biosynthesis; L-methionine biosynthesis via de novo pathway; L-methionine from L-homocysteine (MetE route): step 1/1. Its function is as follows. Catalyzes the transfer of a methyl group from 5-methyltetrahydrofolate to homocysteine resulting in methionine formation. This chain is 5-methyltetrahydropteroyltriglutamate--homocysteine methyltransferase, found in Saccharophagus degradans (strain 2-40 / ATCC 43961 / DSM 17024).